We begin with the raw amino-acid sequence, 124 residues long: UPF0231 protein Shewana3_0655 (124 aa).

The protein belongs to the UPF0231 family.

The chain is UPF0231 protein Shewana3_0655 from Shewanella sp. (strain ANA-3).